The following is a 3419-amino-acid chain: Utrophin (3419 aa).

The actin-binding stretch occupies residues 1–246; it reads MAKYGHLEAS…LPDKKSIIMY (246 aa). Y4 carries the post-translational modification Phosphotyrosine. At S10 the chain carries Phosphoserine. 2 Calponin-homology (CH) domains span residues 31–135 and 150–255; these read DVQK…LHWQ and TNSE…EVLP. Positions 268 to 905 are interaction with SYNM; the sequence is TLPRKYKKEC…YQQQLENELK (638 aa). S295 carries the phosphoserine modification. 17 Spectrin repeats span residues 312-416, 421-525, 532-636, 690-795, 801-901, 910-1012, 1019-1121, 1128-1229, 1236-1333, 1335-1436, 1438-1540, 1547-1648, 1653-1747, 1748-1840, 1841-1958, 1969-2070, and 2077-2176; these read DSYQ…SRLH, ELQK…NRLQ, QELL…NQVT, KKFD…RKIQ, NAYF…QQLE, PAYL…RSLE, RDFK…SRLS, MNLK…HTLE, VELL…ISLE, QLQV…LFQK, ANFE…QDLE, RKLK…NTLL, QLEV…INSA, QMLI…KIKA, IPQR…SDRR, KQFH…PRLK, and SGYR…KTRT. Positions 1336 to 1761 are interaction with SYNM; the sequence is LQVLRETDHM…GQDPAGTVEA (426 aa). S1998 carries the post-translational modification Phosphoserine. S2201 bears the Phosphoserine mark. Spectrin repeat units follow at residues 2216 to 2319, 2336 to 2426, 2433 to 2542, 2549 to 2674, and 2681 to 2783; these read ADLD…QQLE, EELM…SALE, QTSR…AHLE, NRLL…KQVG, and RDLQ…KQLQ. Positions 2616-2640 are disordered; it reads DQPIEAPEEPRRNPQSKTELTPEER. The segment at 2785–3152 is interaction with SYNM; sequence AHRDFGPSSQ…TVLEGDNLET (368 aa). Positions 2799 to 2832 constitute a WW domain; the sequence is TSVQLPWQRSISHNKVPYYINHQTQTTCWDHPKM. The ZZ-type; degenerate zinc-finger motif lies at 3052–3108; the sequence is KHQAKCNICKECPIVGFRYRSLKHFNYDVCQSCFFSGRTAKGHKLHYPMVEYCIPTT. Residues C3057, C3060, C3081, and C3084 each contribute to the Zn(2+) site. 2 disordered regions span residues 3277 to 3296 and 3344 to 3395; these read RRGL…YHTS and DSDS…TDLT. S3284 is modified (phosphoserine).

Homodimer. Interacts with the syntrophins SNTA1; SNTB1 and SNTB2. Interacts with SYNM. Interacts (via its WWW and ZZ domains) with DAG1 (via the PPXY motif of betaDAG1); the interaction is inhibited by the tyrosine phosphorylation of the PPXY motif of DAG1. Interacts with DTNB. Interacts with PGM5.

The protein resides in the postsynaptic cell membrane. The protein localises to the cytoplasm. Its subcellular location is the cytoskeleton. In terms of biological role, may play a role in anchoring the cytoskeleton to the plasma membrane. The protein is Utrophin of Rattus norvegicus (Rat).